The primary structure comprises 148 residues: MAAPIILFSFLLFFSVSVSALNVGVQLIHPSISLTKECSRKCESEFCSVPPFLRYGKYCGLLYSGCPGERPCDGLDSCCMKHDACVQSKNNDYLSQECSQKFINCMNNFSQKKQPTFKGNKCDADEVIDVISIVMEAALIAGKVLKKP.

Positions 1-20 (MAAPIILFSFLLFFSVSVSA) are cleaved as a signal peptide. Disulfide bonds link C38-C66, C42-C72, C47-C122, C59-C79, C78-C105, and C85-C98. The Ca(2+) site is built by Y58, G60, and Y63. H82 is a catalytic residue. Position 83 (D83) interacts with Ca(2+).

It belongs to the phospholipase A2 family. As to quaternary structure, interacts with MYB30. The cofactor is Ca(2+). In terms of tissue distribution, ubiquitous but expressed at a low level.

Its subcellular location is the secreted. The protein resides in the golgi apparatus. It localises to the cytoplasmic vesicle. The protein localises to the nucleus. It carries out the reaction a 1,2-diacyl-sn-glycero-3-phosphocholine + H2O = a 1-acyl-sn-glycero-3-phosphocholine + a fatty acid + H(+). In terms of biological role, PA2 catalyzes the calcium-dependent hydrolysis of the 2-acyl groups in 3-sn-phosphoglycerides. Releases lysophospholipids (LPLs) and free fatty acids (FFAs) from membrane phospholipids in response to hormones and other external stimuli. Modulates the trafficking of PIN proteins to the plasma membrane. Negatively regulates MYB30 transcriptional activity and hypersensitive response control. The protein is Phospholipase A2-alpha of Arabidopsis thaliana (Mouse-ear cress).